The following is a 232-amino-acid chain: Large ribosomal subunit protein uL1 (232 aa).

The protein belongs to the universal ribosomal protein uL1 family. As to quaternary structure, part of the 50S ribosomal subunit.

Binds directly to 23S rRNA. The L1 stalk is quite mobile in the ribosome, and is involved in E site tRNA release. Its function is as follows. Protein L1 is also a translational repressor protein, it controls the translation of the L11 operon by binding to its mRNA. The sequence is that of Large ribosomal subunit protein uL1 from Bartonella quintana (strain Toulouse) (Rochalimaea quintana).